Consider the following 464-residue polypeptide: Soluble pyridine nucleotide transhydrogenase (464 aa).

35–44 (DSRRVVGGNC) lines the FAD pocket.

It belongs to the class-I pyridine nucleotide-disulfide oxidoreductase family. FAD is required as a cofactor.

It localises to the cytoplasm. The enzyme catalyses NAD(+) + NADPH = NADH + NADP(+). Functionally, conversion of NADPH, generated by peripheral catabolic pathways, to NADH, which can enter the respiratory chain for energy generation. The protein is Soluble pyridine nucleotide transhydrogenase of Pseudomonas paraeruginosa (strain DSM 24068 / PA7) (Pseudomonas aeruginosa (strain PA7)).